The following is a 518-amino-acid chain: Probable bifunctional methylthioribulose-1-phosphate dehydratase/enolase-phosphatase E1 (518 aa).

Positions 1–242 are methylthioribulose-1-phosphate dehydratase; the sequence is MACCGGGRGE…AIKLYQLGID (242 aa). Cys114 serves as a coordination point for substrate. 2 residues coordinate Zn(2+): His132 and His134. Catalysis depends on Glu157, which acts as the Proton donor/acceptor; for methylthioribulose-1-phosphate dehydratase activity. A Zn(2+)-binding site is contributed by His207. Residues 279-518 form an enolase-phosphatase E1 region; that stretch reads VVLDIEGTTT…FRTIKSFSEI (240 aa). Residues Asp282 and Glu284 each coordinate Mg(2+). Residues 417-418 and Lys451 each bind substrate; that span reads SS. Asp477 provides a ligand contact to Mg(2+).

It in the N-terminal section; belongs to the aldolase class II family. MtnB subfamily. The protein in the C-terminal section; belongs to the HAD-like hydrolase superfamily. MasA/MtnC family. The cofactor is Zn(2+). Mg(2+) is required as a cofactor.

It catalyses the reaction 5-(methylsulfanyl)-D-ribulose 1-phosphate = 5-methylsulfanyl-2,3-dioxopentyl phosphate + H2O. The enzyme catalyses 5-methylsulfanyl-2,3-dioxopentyl phosphate + H2O = 1,2-dihydroxy-5-(methylsulfanyl)pent-1-en-3-one + phosphate. The protein operates within amino-acid biosynthesis; L-methionine biosynthesis via salvage pathway; L-methionine from S-methyl-5-thio-alpha-D-ribose 1-phosphate: step 2/6. It participates in amino-acid biosynthesis; L-methionine biosynthesis via salvage pathway; L-methionine from S-methyl-5-thio-alpha-D-ribose 1-phosphate: step 3/6. It functions in the pathway amino-acid biosynthesis; L-methionine biosynthesis via salvage pathway; L-methionine from S-methyl-5-thio-alpha-D-ribose 1-phosphate: step 4/6. This Oryza sativa subsp. indica (Rice) protein is Probable bifunctional methylthioribulose-1-phosphate dehydratase/enolase-phosphatase E1.